The chain runs to 421 residues: Synaptotagmin-15 (421 aa).

Over 1-4 the chain is Extracellular; the sequence is MAEQ. Residues 5-29 traverse the membrane as a helical; Signal-anchor for type III membrane protein segment; it reads LALVIGGTIGGLLLLLLIGASCCLW. Residues 30 to 421 are Cytoplasmic-facing; sequence RRFCATLTYE…WHALCRTTEP (392 aa). Positions 47-68 are disordered; that stretch reads MATTAASSGQRDRPCQPHARTQ. C2 domains follow at residues 147 to 264 and 278 to 399; these read CLGR…RRVI and EFGD…EHWD.

This sequence belongs to the synaptotagmin family. As to quaternary structure, homodimer.

Its subcellular location is the cell membrane. Functionally, may be involved in the trafficking and exocytosis of secretory vesicles in non-neuronal tissues. The chain is Synaptotagmin-15 (SYT15) from Homo sapiens (Human).